A 554-amino-acid chain; its full sequence is Phenylalanine--tRNA ligase beta subunit (554 aa).

The region spanning 276 to 351 (LTLKSRIISI…INYGYEKFEG (76 aa)) is the B5 domain. Mg(2+) is bound by residues Asp-329, Asp-335, Glu-338, and Glu-339.

Belongs to the phenylalanyl-tRNA synthetase beta subunit family. Type 2 subfamily. As to quaternary structure, tetramer of two alpha and two beta subunits. Requires Mg(2+) as cofactor.

The protein localises to the cytoplasm. The enzyme catalyses tRNA(Phe) + L-phenylalanine + ATP = L-phenylalanyl-tRNA(Phe) + AMP + diphosphate + H(+). This chain is Phenylalanine--tRNA ligase beta subunit, found in Methanococcus maripaludis (strain C7 / ATCC BAA-1331).